Here is a 24-residue protein sequence, read N- to C-terminus: LSFQQVKEKVCKVEAKIGKKLPFC.

Residues Cys11 and Cys24 are joined by a disulfide bond. A Cysteine amide modification is found at Cys24.

In terms of tissue distribution, expressed by the venom gland.

It is found in the secreted. Wasp venom peptide that acts as a potent mast cell degranulating peptide without hemolytic activity. Shows neuroprotective effect, since it prevents the death of dopaminergic neurons of the brain substantia nigra region and recovers motor deficit in a 6-hydroxydopamine (6-OHDA)-induced murine model of Parkinson disease. In Parachartergus fraternus (Artistic wasp), this protein is Fraternine.